The sequence spans 283 residues: 4-diphosphocytidyl-2-C-methyl-D-erythritol kinase (283 aa).

Lys10 is an active-site residue. Position 99–109 (99–109 (PMGGGLGGGSS)) interacts with ATP. The active site involves Asp141.

Belongs to the GHMP kinase family. IspE subfamily. As to quaternary structure, homodimer.

It carries out the reaction 4-CDP-2-C-methyl-D-erythritol + ATP = 4-CDP-2-C-methyl-D-erythritol 2-phosphate + ADP + H(+). It functions in the pathway isoprenoid biosynthesis; isopentenyl diphosphate biosynthesis via DXP pathway; isopentenyl diphosphate from 1-deoxy-D-xylulose 5-phosphate: step 3/6. Its function is as follows. Catalyzes the phosphorylation of the position 2 hydroxy group of 4-diphosphocytidyl-2C-methyl-D-erythritol. The chain is 4-diphosphocytidyl-2-C-methyl-D-erythritol kinase from Citrobacter koseri (strain ATCC BAA-895 / CDC 4225-83 / SGSC4696).